The sequence spans 341 residues: Anthranilate phosphoribosyltransferase (341 aa).

5-phospho-alpha-D-ribose 1-diphosphate is bound by residues Gly-79, 82 to 83, Thr-87, 89 to 92, 107 to 115, and Ser-119; these read GD, NIST, and KHGNRAVSS. Gly-79 is an anthranilate binding site. Position 91 (Ser-91) interacts with Mg(2+). Residue Asn-110 participates in anthranilate binding. Arg-165 lines the anthranilate pocket. Mg(2+) is bound by residues Asp-224 and Glu-225.

This sequence belongs to the anthranilate phosphoribosyltransferase family. Homodimer. Mg(2+) serves as cofactor.

The catalysed reaction is N-(5-phospho-beta-D-ribosyl)anthranilate + diphosphate = 5-phospho-alpha-D-ribose 1-diphosphate + anthranilate. It functions in the pathway amino-acid biosynthesis; L-tryptophan biosynthesis; L-tryptophan from chorismate: step 2/5. Its function is as follows. Catalyzes the transfer of the phosphoribosyl group of 5-phosphorylribose-1-pyrophosphate (PRPP) to anthranilate to yield N-(5'-phosphoribosyl)-anthranilate (PRA). This Bacillus cereus (strain AH820) protein is Anthranilate phosphoribosyltransferase.